Here is a 53-residue protein sequence, read N- to C-terminus: uncharacterized protein (53 aa).

Positions 34–53 (RKEKGKRHAAPLSLMGVHKR) are disordered.

This is an uncharacterized protein from Treponema pallidum (strain Nichols).